A 363-amino-acid polypeptide reads, in one-letter code: Peptide chain release factor 2 (363 aa).

Residue Gln-251 is modified to N5-methylglutamine.

Belongs to the prokaryotic/mitochondrial release factor family. Methylated by PrmC. Methylation increases the termination efficiency of RF2.

The protein resides in the cytoplasm. Its function is as follows. Peptide chain release factor 2 directs the termination of translation in response to the peptide chain termination codons UGA and UAA. This chain is Peptide chain release factor 2, found in Helicobacter pylori (strain P12).